We begin with the raw amino-acid sequence, 146 residues long: Copper transporter 5 (146 aa).

A helical transmembrane segment spans residues W24–L44. The disordered stretch occupies residues S55–L74. A helical membrane pass occupies residues L101 to L121.

It belongs to the copper transporter (Ctr) (TC 1.A.56) family. SLC31A subfamily. Highly expressed in leaves and stems and at lower levels in roots and flowers.

The protein resides in the membrane. In terms of biological role, involved in the transport of copper. The polypeptide is Copper transporter 5 (COPT5) (Arabidopsis thaliana (Mouse-ear cress)).